The sequence spans 388 residues: Venom acid phosphatase Acph-1 (388 aa).

The first 15 residues, Met1–Ala15, serve as a signal peptide directing secretion. The Nucleophile role is filled by His26. 2 cysteine pairs are disulfide-bonded: Cys145–Cys355 and Cys330–Cys334. N-linked (GlcNAc...) asparagine glycosylation is found at Asn182 and Asn228. Glu273 functions as the Proton donor in the catalytic mechanism. N-linked (GlcNAc...) asparagine glycosylation is present at Asn366.

This sequence belongs to the histidine acid phosphatase family. Expressed by the venom gland.

It localises to the secreted. The catalysed reaction is a phosphate monoester + H2O = an alcohol + phosphate. In Apis mellifera (Honeybee), this protein is Venom acid phosphatase Acph-1.